Reading from the N-terminus, the 123-residue chain is UPF0102 protein DR_2282 (123 aa).

It belongs to the UPF0102 family.

The polypeptide is UPF0102 protein DR_2282 (Deinococcus radiodurans (strain ATCC 13939 / DSM 20539 / JCM 16871 / CCUG 27074 / LMG 4051 / NBRC 15346 / NCIMB 9279 / VKM B-1422 / R1)).